Reading from the N-terminus, the 345-residue chain is S-adenosylmethionine:tRNA ribosyltransferase-isomerase (345 aa).

Belongs to the QueA family. As to quaternary structure, monomer.

Its subcellular location is the cytoplasm. The enzyme catalyses 7-aminomethyl-7-carbaguanosine(34) in tRNA + S-adenosyl-L-methionine = epoxyqueuosine(34) in tRNA + adenine + L-methionine + 2 H(+). Its pathway is tRNA modification; tRNA-queuosine biosynthesis. In terms of biological role, transfers and isomerizes the ribose moiety from AdoMet to the 7-aminomethyl group of 7-deazaguanine (preQ1-tRNA) to give epoxyqueuosine (oQ-tRNA). This Helicobacter pylori (strain G27) protein is S-adenosylmethionine:tRNA ribosyltransferase-isomerase.